The primary structure comprises 218 residues: Pyridoxine/pyridoxamine 5'-phosphate oxidase (218 aa).

Residues 12–15 (RMSY) and Arg70 each bind substrate. Residues 65 to 70 (RTVLLR), 80 to 81 (YT), Lys87, and Gln109 contribute to the FMN site. Substrate is bound by residues Tyr127, Arg131, and Ser135. FMN is bound by residues 145-146 (QS) and Trp191. Position 197-199 (197-199 (RLH)) interacts with substrate. Arg201 provides a ligand contact to FMN.

This sequence belongs to the pyridoxamine 5'-phosphate oxidase family. Homodimer. The cofactor is FMN.

It catalyses the reaction pyridoxamine 5'-phosphate + O2 + H2O = pyridoxal 5'-phosphate + H2O2 + NH4(+). It carries out the reaction pyridoxine 5'-phosphate + O2 = pyridoxal 5'-phosphate + H2O2. It participates in cofactor metabolism; pyridoxal 5'-phosphate salvage; pyridoxal 5'-phosphate from pyridoxamine 5'-phosphate: step 1/1. Its pathway is cofactor metabolism; pyridoxal 5'-phosphate salvage; pyridoxal 5'-phosphate from pyridoxine 5'-phosphate: step 1/1. Its function is as follows. Catalyzes the oxidation of either pyridoxine 5'-phosphate (PNP) or pyridoxamine 5'-phosphate (PMP) into pyridoxal 5'-phosphate (PLP). This is Pyridoxine/pyridoxamine 5'-phosphate oxidase from Acinetobacter baylyi (strain ATCC 33305 / BD413 / ADP1).